The following is a 425-amino-acid chain: Glutamate-1-semialdehyde 2,1-aminomutase (425 aa).

Residue K265 is modified to N6-(pyridoxal phosphate)lysine.

Belongs to the class-III pyridoxal-phosphate-dependent aminotransferase family. HemL subfamily. In terms of assembly, homodimer. Pyridoxal 5'-phosphate serves as cofactor.

The protein localises to the cytoplasm. It carries out the reaction (S)-4-amino-5-oxopentanoate = 5-aminolevulinate. It functions in the pathway porphyrin-containing compound metabolism; protoporphyrin-IX biosynthesis; 5-aminolevulinate from L-glutamyl-tRNA(Glu): step 2/2. In Laribacter hongkongensis (strain HLHK9), this protein is Glutamate-1-semialdehyde 2,1-aminomutase.